The chain runs to 382 residues: Mannitol-1-phosphate 5-dehydrogenase (382 aa).

3–14 (ALHFGAGNIGRG) is a binding site for NAD(+).

This sequence belongs to the mannitol dehydrogenase family.

The enzyme catalyses D-mannitol 1-phosphate + NAD(+) = beta-D-fructose 6-phosphate + NADH + H(+). The chain is Mannitol-1-phosphate 5-dehydrogenase from Mannheimia succiniciproducens (strain KCTC 0769BP / MBEL55E).